The sequence spans 664 residues: Cyclic nucleotide-gated channel alpha-2 (664 aa).

Over residues 1 to 10 (MMTEKSNGVK) the composition is skewed to polar residues. Residues 1 to 61 (MMTEKSNGVK…LQRLAEMDTP (61 aa)) are disordered. Topologically, residues 1-146 (MMTEKSNGVK…PAGDWYYRWL (146 aa)) are cytoplasmic. Residues 147 to 168 (FVIAMPVLYNWCLLVARACFSD) form a helical membrane-spanning segment. The Extracellular portion of the chain corresponds to 169 to 178 (LQRNYFVVWL). The helical transmembrane segment at 179–199 (VLDYFSDTVYIADLIIRLRTG) threads the bilayer. The Cytoplasmic segment spans residues 200–224 (FLEQGLLVKDPKKLRDNYIHTLQFK). A helical membrane pass occupies residues 225 to 243 (LDVASIIPTDLIYFAVGIH). At 244–248 (SPEVR) the chain is on the extracellular side. A helical membrane pass occupies residues 249–267 (FNRLLHFARMFEFFDRTET). Residues 268 to 274 (RTSYPNI) lie on the Cytoplasmic side of the membrane. The tract at residues 272-380 (PNIFRISNLV…GNVGSMISNM (109 aa)) is ion conduction pathway. A helical transmembrane segment spans residues 275–298 (FRISNLVLYILVIIHWNACIYYAI). Over 299-321 (SKSIGFGVDTWVYPNITDPEYGY) the chain is Extracellular. Transmembrane regions (helical) follow at residues 322 to 356 (LAREYIYCLYWSTLTLTTIGETPPPVKDEEYLFVI) and 357 to 381 (FDFLIGVLIFATIVGNVGSMISNMN). Residues 339 to 342 (TIGE) form a selectivity filter region. The interval 382 to 458 (ATRAEFQAKI…STLKKVRIFQ (77 aa)) is C-linker. Topologically, residues 382-664 (ATRAEFQAKI…INTPEPAVAE (283 aa)) are cytoplasmic. The tract at residues 462–582 (AGLLVELVLK…EERGREILMK (121 aa)) is cyclic nucleotide-binding domain. The 3',5'-cyclic GMP site is built by G522, S525, R538, and T539. R538 and T539 together coordinate 3',5'-cyclic AMP. Residues 599–653 (VQEKLEQLETNMETLYTRFARLLAEYTGAQQKLKQRITVLETKMKQNHEDDYLSD) adopt a coiled-coil conformation.

The protein belongs to the cyclic nucleotide-gated cation channel (TC 1.A.1.5) family. CNGA2 subfamily. The olfactory cyclic nucleotide-gated channel is an heterotetramer composed of CNGA2, CNGA4 and CNGB1b subunits with 2:1:1 stoichiometry.

The protein resides in the cell projection. It localises to the cilium membrane. The enzyme catalyses Ca(2+)(in) = Ca(2+)(out). The catalysed reaction is Na(+)(in) = Na(+)(out). It catalyses the reaction K(+)(in) = K(+)(out). It carries out the reaction NH4(+)(in) = NH4(+)(out). The enzyme catalyses Rb(+)(in) = Rb(+)(out). The catalysed reaction is Li(+)(in) = Li(+)(out). It catalyses the reaction Cs(+)(in) = Cs(+)(out). Pore-forming subunit of the olfactory cyclic nucleotide-gated channel. Operates in the cilia of olfactory sensory neurons where chemical stimulation of the odorant is converted to an electrical signal. Mediates odorant-induced cAMP-dependent Ca(2+) influx triggering neuron depolarization. The rise of intracellular Ca(2+) levels potentiates the olfactory response by activating Ca(2+)-dependent Cl(-) channels, but it also serves as a negative feedback signal to desensitize the channel for rapid adaptation to odorants. Conducts cAMP- and cGMP-gated ion currents, with permeability for monovalent and divalent cations. The sequence is that of Cyclic nucleotide-gated channel alpha-2 from Mus musculus (Mouse).